The chain runs to 419 residues: S-adenosylmethionine synthase (419 aa).

Residue His14 participates in ATP binding. A Mg(2+)-binding site is contributed by Asp16. Residue Glu42 participates in K(+) binding. L-methionine-binding residues include Glu55 and Gln98. The segment at 98-108 is flexible loop; it reads QSADINQGVDR. ATP contacts are provided by residues 164–166, 242–243, Asp251, 257–258, Ala274, and Lys278; these read DAK, KF, and RK. Asp251 is an L-methionine binding site. Lys282 serves as a coordination point for L-methionine.

It belongs to the AdoMet synthase family. In terms of assembly, homotetramer; dimer of dimers. It depends on Mg(2+) as a cofactor. K(+) is required as a cofactor.

It localises to the cytoplasm. It catalyses the reaction L-methionine + ATP + H2O = S-adenosyl-L-methionine + phosphate + diphosphate. It participates in amino-acid biosynthesis; S-adenosyl-L-methionine biosynthesis; S-adenosyl-L-methionine from L-methionine: step 1/1. Catalyzes the formation of S-adenosylmethionine (AdoMet) from methionine and ATP. The overall synthetic reaction is composed of two sequential steps, AdoMet formation and the subsequent tripolyphosphate hydrolysis which occurs prior to release of AdoMet from the enzyme. This chain is S-adenosylmethionine synthase, found in Cytophaga hutchinsonii (strain ATCC 33406 / DSM 1761 / CIP 103989 / NBRC 15051 / NCIMB 9469 / D465).